The chain runs to 248 residues: ATP synthase subunit a, chloroplastic (248 aa).

The next 4 membrane-spanning stretches (helical) occupy residues 34–54 (LHGQ…IFAL), 95–115 (VPYI…GALI), 134–154 (INVT…AGIS), and 203–223 (VFAL…GLFA).

This sequence belongs to the ATPase A chain family. As to quaternary structure, F-type ATPases have 2 components, CF(1) - the catalytic core - and CF(0) - the membrane proton channel. CF(1) has five subunits: alpha(3), beta(3), gamma(1), delta(1), epsilon(1). CF(0) has four main subunits: a, b, b' and c.

Its subcellular location is the plastid. It localises to the chloroplast thylakoid membrane. Its function is as follows. Key component of the proton channel; it plays a direct role in the translocation of protons across the membrane. The sequence is that of ATP synthase subunit a, chloroplastic from Guillardia theta (Cryptophyte).